Reading from the N-terminus, the 362-residue chain is Hydroxycarboxylate dehydrogenase A (362 aa).

3 residues coordinate Zn(2+): aspartate 173, histidine 257, and histidine 274.

It belongs to the iron-containing alcohol dehydrogenase family. Zn(2+) serves as cofactor.

It carries out the reaction 2-hydroxybutanoate + NADP(+) = 2-oxobutanoate + NADPH + H(+). It catalyses the reaction 2-hydroxyglutarate + NADP(+) = 2-oxoglutarate + NADPH + H(+). Catalyzes the NADPH-dependent reduction of 2-oxoglutarate and 2-oxobutanoate, leading to the respective 2-hydroxycarboxylate. Cannot use NADH instead of NADPH as a redox partner. Do not catalyze the reverse reactions. The chain is Hydroxycarboxylate dehydrogenase A from Escherichia coli (strain K12).